Here is a 324-residue protein sequence, read N- to C-terminus: Probable tRNA pseudouridine synthase B (324 aa).

The active-site Nucleophile is Asp72. In terms of domain architecture, PUA spans 239 to 314; the sequence is LPRVVILDSA…LVIETRKVFM (76 aa).

This sequence belongs to the pseudouridine synthase TruB family. Type 2 subfamily.

It catalyses the reaction uridine(55) in tRNA = pseudouridine(55) in tRNA. Could be responsible for synthesis of pseudouridine from uracil-55 in the psi GC loop of transfer RNAs. In Methanothermobacter thermautotrophicus (strain ATCC 29096 / DSM 1053 / JCM 10044 / NBRC 100330 / Delta H) (Methanobacterium thermoautotrophicum), this protein is Probable tRNA pseudouridine synthase B.